Consider the following 301-residue polypeptide: 2-oxo-3-(phosphooxy)propyl 3-oxoalkanoate synthase (301 aa).

It belongs to the AfsA family.

It catalyses the reaction a medium-chain 3-oxoacyl-[ACP] + dihydroxyacetone phosphate = a (4-alkanoyl-5-oxo-2,5-dihydrofuran-3-yl)methyl phosphate + holo-[ACP] + H2O. Functionally, involved in the biosynthesis of A factor (2-isocapryloyl-3R-hydroxymethyl-gamma-butyrolactone), a gamma-butyrolactone autoregulator that triggers secondary metabolism and morphogenesis in Streptomyces. Catalyzes beta-ketoacyl transfer from 8-methyl-3-oxononanoyl-acyl carrier protein (ACP) to the hydroxyl group of dihydroxyacetone phosphate (DHAP), thus producing an 8-methyl-3-oxononanoyl-DHAP ester. In Streptomyces griseus, this protein is 2-oxo-3-(phosphooxy)propyl 3-oxoalkanoate synthase.